A 257-amino-acid polypeptide reads, in one-letter code: Diphthine synthase (257 aa).

S-adenosyl-L-methionine is bound by residues Ile-11, Asp-89, Ile-92, 117–118 (SV), Leu-169, Leu-210, and His-235.

This sequence belongs to the diphthine synthase family. Homodimer.

The enzyme catalyses 2-[(3S)-amino-3-carboxypropyl]-L-histidyl-[translation elongation factor 2] + 3 S-adenosyl-L-methionine = diphthine-[translation elongation factor 2] + 3 S-adenosyl-L-homocysteine + 3 H(+). It functions in the pathway protein modification; peptidyl-diphthamide biosynthesis. In terms of biological role, S-adenosyl-L-methionine-dependent methyltransferase that catalyzes the trimethylation of the amino group of the modified target histidine residue in translation elongation factor 2 (EF-2), to form an intermediate called diphthine. The three successive methylation reactions represent the second step of diphthamide biosynthesis. The sequence is that of Diphthine synthase from Saccharolobus solfataricus (strain ATCC 35092 / DSM 1617 / JCM 11322 / P2) (Sulfolobus solfataricus).